A 541-amino-acid polypeptide reads, in one-letter code: Propionyl-CoA carboxylase beta chain, mitochondrial (541 aa).

The N-terminal 28 residues, 1-28 (MAAAIRIRAVAAGARLSVLNCGLGITTR), are a transit peptide targeting the mitochondrion. In terms of domain architecture, CoA carboxyltransferase N-terminal spans 34–292 (PVSVKERIDN…SSQDPAPIRE (259 aa)). The tract at residues 34–535 (PVSVKERIDN…SKKVHRPWRK (502 aa)) is carboxyltransferase. The residue at position 73 (S73) is a Phosphoserine. Position 101 is an N6-acetyllysine; alternate (K101). An N6-succinyllysine; alternate modification is found at K101. At K250 the chain carries N6-succinyllysine. The CoA carboxyltransferase C-terminal domain occupies 296–535 (PSDRLVPELD…SKKVHRPWRK (240 aa)). An acyl-CoA binding region spans residues 327-360 (DEREFFEIMPSYAKNIVVGFARMNGRTVGIVGNQ). 2 positions are modified to N6-acetyllysine; alternate: K476 and K491. An N6-succinyllysine; alternate mark is found at K476 and K491.

The protein belongs to the AccD/PCCB family. As to quaternary structure, the holoenzyme is a dodecamer composed of 6 PCCA/alpha subunits and 6 PCCB/beta subunits. Broadly expressed. Most abundantly expressed in the kidney, liver, small intestine and stomach.

The protein localises to the mitochondrion matrix. The enzyme catalyses propanoyl-CoA + hydrogencarbonate + ATP = (S)-methylmalonyl-CoA + ADP + phosphate + H(+). The catalysed reaction is butanoyl-CoA + hydrogencarbonate + ATP = (2S)-ethylmalonyl-CoA + ADP + phosphate + H(+). It participates in metabolic intermediate metabolism; propanoyl-CoA degradation; succinyl-CoA from propanoyl-CoA: step 1/3. This is one of the 2 subunits of the biotin-dependent propionyl-CoA carboxylase (PCC), a mitochondrial enzyme involved in the catabolism of odd chain fatty acids, branched-chain amino acids isoleucine, threonine, methionine, and valine and other metabolites. Propionyl-CoA carboxylase catalyzes the carboxylation of propionyl-CoA/propanoyl-CoA to D-methylmalonyl-CoA/(S)-methylmalonyl-CoA. Within the holoenzyme, the alpha subunit catalyzes the ATP-dependent carboxylation of the biotin carried by the biotin carboxyl carrier (BCC) domain, while the beta subunit then transfers the carboxyl group from carboxylated biotin to propionyl-CoA. Propionyl-CoA carboxylase also significantly acts on butyryl-CoA/butanoyl-CoA, which is converted to ethylmalonyl-CoA/(2S)-ethylmalonyl-CoA. Other alternative minor substrates include (2E)-butenoyl-CoA/crotonoyl-CoA. The polypeptide is Propionyl-CoA carboxylase beta chain, mitochondrial (Mus musculus (Mouse)).